The sequence spans 1342 residues: MVYSYTEKKRIRKDFGKRPQVLNVPYLLTIQLDSFDKFIQRDPEGQQGLEAAFRSVFPIVSNNGNTELQYVSYQLGEPVFDVRECQIRGTTYAAPLRVKLRLVSYDKDAAPGTIKDIKEQEVYMGEIPLMTDNGTFVINGTERVIVSQLHRSPGVFFDSDKGKTHSSGKVLYNARIIPYRGSWLDFEFDPKDNLYARIDRRRKLPATIILRALNYTTEQILDIFFDKVVFEISNNKLLMTLVPERLRGETATFDIEANGKVYVERGRRITARHIRALEKDQITQVEVPTEYIVGKVAAKDYVDLESGEIVCPANMEISLEMLAKLAQAGYKTIETLFTNDLDYGPYISETLRVDPSNDRLSALVEIYRMMRPGEPPTKEAAEGLFDNLFFSSDRYDLSAVGRMKFNRSLGIDEETGSGILSNDDIIGVMKKLIEIRNGRGEVDDIDHLGNRRIRSVGEMAENQFRIGLVRVERAVKERLSLGDLDAVTPQDLINAKPISAAVKEFFGSSQLSQFMDQNNPLSEVTHKRRISALGPGGLTRERAGFEVRDVHATHYGRVCPIETPEGPNIGLINSLSVYARTNDYGFLETPYRKVVNGQVTEEIEYLSAIEEGKYVIAQANSNLDEELRFTDAFVTCRGEHGESGLYRPDEIHYMDVSTQQVVSVAAALIPFLEHDDANRALMGANMQRQAVPTLRADKPLVGTGIEKAVAVDSGVTVIAKRGGMVQYVDASRIVVKVNEDETIPGEAGIDIYNLVKYTRSNQNTCINQIPCVSLGEPIGRGEVLADGPSTDLGELALGQNMRVAFMPWNGYNFEDSMLVSERVVQEDRFTTIHIQELSCVARDTKLGSEEITADIPNVGEAALSKLDESGIVYIGAEVKGGDILVGKVTPKGETQLTPEEKLLRAIFGEKASDVKDSSLRVPNSVSGTVIDVQVFTRDGVEKDKRALEIEEMQLKQAKKDLVEELEILEAGLFTRVRSLLIAGGFDAKNLDKLDRTKWLEQSLSDEAQQNQLEQLAEQYEELRKEFERKLEVQRGKIIQGDDLAPGVLKVVKVYLAVKRQIQPGDKMAGRHGNKGVISKINPVEDMPYDENGQPVDIVLNPLGVPSRMNIGQILETHLGLAAKGIGDKINAMIKQQQDVAKLREYMQKAYDLGHGSQKVDLSTFSDEEVMRLAQNLRKGLPLATPVFDGAHESEIKGLLELGGLPTSGQITLFDGRTGEKFERPVTVGYMYMLKLNHLVDDKMHARSTGSYSLVTQQPLGGKAQFGGQRFGEMEVWALEAYGAAYTLQEMLTVKSDDVNGRTKMYKNIVGGTHQMDPGTPESFNVIMKEIRSLGINIDLDED.

The protein belongs to the RNA polymerase beta chain family. As to quaternary structure, the RNAP catalytic core consists of 2 alpha, 1 beta, 1 beta' and 1 omega subunit. When a sigma factor is associated with the core the holoenzyme is formed, which can initiate transcription.

It catalyses the reaction RNA(n) + a ribonucleoside 5'-triphosphate = RNA(n+1) + diphosphate. DNA-dependent RNA polymerase catalyzes the transcription of DNA into RNA using the four ribonucleoside triphosphates as substrates. This chain is DNA-directed RNA polymerase subunit beta, found in Pasteurella multocida (strain Pm70).